The primary structure comprises 325 residues: Tagatose 1,6-diphosphate aldolase 1 (325 aa).

Belongs to the aldolase LacD family.

It catalyses the reaction D-tagatofuranose 1,6-bisphosphate = D-glyceraldehyde 3-phosphate + dihydroxyacetone phosphate. It participates in carbohydrate metabolism; D-tagatose 6-phosphate degradation; D-glyceraldehyde 3-phosphate and glycerone phosphate from D-tagatose 6-phosphate: step 2/2. This Streptococcus mutans serotype c (strain ATCC 700610 / UA159) protein is Tagatose 1,6-diphosphate aldolase 1 (lacD1).